Reading from the N-terminus, the 221-residue chain is Uracil-DNA glycosylase (221 aa).

The active-site Proton acceptor is the aspartate 63.

This sequence belongs to the uracil-DNA glycosylase (UDG) superfamily. UNG family.

The protein localises to the cytoplasm. The catalysed reaction is Hydrolyzes single-stranded DNA or mismatched double-stranded DNA and polynucleotides, releasing free uracil.. Its function is as follows. Excises uracil residues from the DNA which can arise as a result of misincorporation of dUMP residues by DNA polymerase or due to deamination of cytosine. The sequence is that of Uracil-DNA glycosylase from Blochmanniella floridana.